The primary structure comprises 842 residues: Synaptonemal complex protein 2-like (842 aa).

Disordered regions lie at residues 451-473, 505-560, 619-666, and 715-738; these read GSLEITNTEERSLENSKQDEPEQ, FARD…KQRV, STQK…SSLE, and EDAPGSPVVTDTSTPSQEDMPGSV. 2 stretches are compositionally biased toward basic and acidic residues: residues 458-470 and 505-525; these read TEERSLENSKQDE and FARDREQDRRMPFNDRNHDLL. Basic residues predominate over residues 543 to 559; sequence NHKRKSLRTYSQRKKQR. Composition is skewed to basic and acidic residues over residues 624-633 and 643-655; these read GLEKPERRGS and RVTDGLHWREPRS.

The protein belongs to the SYCP2 family. Specifically expressed in oocytes.

The protein resides in the nucleus. The protein localises to the chromosome. It is found in the centromere. Functionally, oocyte-specific protein that localizes to centromeres at the dictyate stage and regulates the survival of primordial oocytes. The protein is Synaptonemal complex protein 2-like of Mus musculus (Mouse).